Here is a 110-residue protein sequence, read N- to C-terminus: Large ribosomal subunit protein uL22 (110 aa).

The protein belongs to the universal ribosomal protein uL22 family. As to quaternary structure, part of the 50S ribosomal subunit.

In terms of biological role, this protein binds specifically to 23S rRNA; its binding is stimulated by other ribosomal proteins, e.g. L4, L17, and L20. It is important during the early stages of 50S assembly. It makes multiple contacts with different domains of the 23S rRNA in the assembled 50S subunit and ribosome. Functionally, the globular domain of the protein is located near the polypeptide exit tunnel on the outside of the subunit, while an extended beta-hairpin is found that lines the wall of the exit tunnel in the center of the 70S ribosome. This Paracidovorax citrulli (strain AAC00-1) (Acidovorax citrulli) protein is Large ribosomal subunit protein uL22.